The primary structure comprises 309 residues: Aromatic prenyltransferase (309 aa).

This sequence belongs to the aromatic prenyltransferase family.

Functionally, prenyltransferase that attaches isoprenoid moieties to carbon atoms of aromatic substrates in an enzyme-catalyzed Friedel-Crafts reaction. Shows specificity for dimethylallyl diphosphate (DMAPP) and does not accept geranyl diphosphate (GPP) or isopentenyl diphosphate (IPP). Prenylates the artificial substrate 2,7-dihydroxynaphthalene (2,7-DHN), as well as dihydrophenazine-1-carboxylic acid and 4-hydroxybenzoic acid at lower levels. Only traces of products are detected with aspulvinone E or flaviolin as substrates; and no product is formed with L-tryptophan, L-tyrosine, or 4-hydroxyphenylpyruvate. Ptf seems no to be involved in the prenylation reaction in the biosynthesis of aspulvinone H and J and the physiological function of ptf remains unknown. The sequence is that of Aromatic prenyltransferase from Sclerotinia sclerotiorum (strain ATCC 18683 / 1980 / Ss-1) (White mold).